We begin with the raw amino-acid sequence, 199 residues long: Ribosome maturation factor RimM (199 aa).

Positions 93–169 (DDEYYHADLI…IELPDEIDGE (77 aa)) constitute a PRC barrel domain. The segment at 164 to 199 (DEIDGEDRASADESASAEDDAAAPNSARHPRESGDP) is disordered.

Belongs to the RimM family. Binds ribosomal protein uS19.

The protein resides in the cytoplasm. An accessory protein needed during the final step in the assembly of 30S ribosomal subunit, possibly for assembly of the head region. Essential for efficient processing of 16S rRNA. May be needed both before and after RbfA during the maturation of 16S rRNA. It has affinity for free ribosomal 30S subunits but not for 70S ribosomes. This Bradyrhizobium sp. (strain ORS 278) protein is Ribosome maturation factor RimM.